Here is a 693-residue protein sequence, read N- to C-terminus: Polyribonucleotide nucleotidyltransferase (693 aa).

Residues Asp-489 and Asp-495 each contribute to the Mg(2+) site. Residues Pro-556–Ile-615 enclose the KH domain. The 69-residue stretch at Gly-625–Arg-693 folds into the S1 motif domain.

Belongs to the polyribonucleotide nucleotidyltransferase family. Component of the RNA degradosome, which is a multiprotein complex involved in RNA processing and mRNA degradation. Mg(2+) is required as a cofactor.

The protein resides in the cytoplasm. The enzyme catalyses RNA(n+1) + phosphate = RNA(n) + a ribonucleoside 5'-diphosphate. Functionally, involved in mRNA degradation. Catalyzes the phosphorolysis of single-stranded polyribonucleotides processively in the 3'- to 5'-direction. This Francisella tularensis subsp. novicida (strain U112) protein is Polyribonucleotide nucleotidyltransferase.